The chain runs to 188 residues: Transmembrane protein 160 (188 aa).

The N-terminal 96 residues, 1–96 (MGGGWWWARV…ISFMQSDMGR (96 aa)), are a transit peptide targeting the mitochondrion. The disordered stretch occupies residues 21 to 53 (SLQPPQRPRSGGARGSFAPGHGPRAGASPPPVS). S48 carries the phosphoserine modification. The next 2 helical transmembrane spans lie at 102–122 (FFLLGGLCVVWGGASYAVGLA) and 135–155 (AAAGVGAVLAASLLWACAVGL). The segment at 168–188 (PEDDGAASTEGPDEAGRPPPE) is disordered.

It belongs to the TMEM160 family. Expressed in peripheral sensory neurons of dorsal root ganglia (DRG).

The protein localises to the mitochondrion inner membrane. This Mus musculus (Mouse) protein is Transmembrane protein 160.